We begin with the raw amino-acid sequence, 387 residues long: MTANNNKKSHIDTRVIHAGQKPDPLTGAVMTPIYTASTYAQKSPGVHQGYEYSRSQNPTRFAYERCVADLESGQHGFAFASGMAATATILELLQPGDHVVVMDDVYGGSYRLFENVRKRSAGLSFSFVDFTDENKVREAVTAKTKMLWVESPSNPRLKIVDLAKIAEIAKEKNIIAVADNTFATPIIQRPLELGFDIVTHSATKYLNGHSDIIGGVAVVGDNKTLAEQLKYLQNAIGAIAAPFDSFMVLRGLKTLAIRMERHCENAMQLAQWLEKHPKVKRVYYPGLPSHPQHSIAKKQMRYFGGMISVELKCDLNETKKVLERCQLFTLAESLGGVESLIEHPAIMTHASIPQAERQKLGITDGFIRLSVGIEAITDLRHDLEAAL.

Lys204 is subject to N6-(pyridoxal phosphate)lysine.

It belongs to the trans-sulfuration enzymes family. As to quaternary structure, homotetramer. Pyridoxal 5'-phosphate is required as a cofactor.

Its subcellular location is the cytoplasm. It catalyses the reaction L,L-cystathionine + H2O = L-homocysteine + pyruvate + NH4(+). The catalysed reaction is an S-substituted L-cysteine + H2O = a thiol + pyruvate + NH4(+). It participates in amino-acid biosynthesis; L-methionine biosynthesis via de novo pathway; L-homocysteine from L-cystathionine: step 1/1. Functionally, catalyzes the cleavage of cystathionine to homocysteine, pyruvate and ammonia during methionine biosynthesis. The sequence is that of Cystathionine beta-lyase (metC) from Coxiella burnetii (strain RSA 493 / Nine Mile phase I).